The chain runs to 1454 residues: Serine/threonine-protein kinase VPS15 (1454 aa).

G2 is lipidated: N-myristoyl glycine. The Protein kinase domain occupies 27 to 300 (VHYVSQLNSS…LLNKYRGIFF (274 aa)). Residues 33–41 (LNSSRFLKT) and K54 contribute to the ATP site. D147 (proton acceptor) is an active-site residue. HEAT repeat units follow at residues 460 to 497 (NKIDRVVPYFVCCFEDSDQDVQALSLLTLIQVLTSVRK), 576 to 613 (KLIQSVEDLTVSFLTDNDTYVKMALLQNILPLCKFFGR), 615 to 652 (RTNDIILSHLITYLNDKDPALRVSLIQTISGISILLGT), and 654 to 691 (TLEQYILPLLIQTITDSEELVVISVLQSLKSLFKTGLI). WD repeat units lie at residues 1078 to 1118 (NEPN…VGEV), 1126 to 1165 (DCSSTVTQITMIPNFDAFAVSSKDGQIIVLKVNHYQQESE), 1229 to 1268 (PRHGAVSSICIDEECCVLILGTTRGIIDIWDIRFNVLIRS), 1275 to 1315 (APIT…CQYA), 1344 to 1382 (RSLNALSTISVSNDKILLTDEATSSIVMFSLNELSSSKA), and 1422 to 1454 (YHHDIINSISTCEVDETPLLVACDNSGLIGIFQ).

This sequence belongs to the protein kinase superfamily. Ser/Thr protein kinase family. Component of the autophagy-specific VPS34 PI3-kinase complex I composed of VPS15, VPS30, VPS34, ATG14 and ATG38; and of the VPS34 PI3-kinase complex II composed of VPS15, VPS30, VPS34 and VPS38. Interacts directly with ATG14 and GPA1. Interacts directly with VPS34. In terms of processing, autophosphorylated.

It localises to the golgi apparatus. Its subcellular location is the trans-Golgi network membrane. The protein localises to the endosome membrane. It catalyses the reaction L-seryl-[protein] + ATP = O-phospho-L-seryl-[protein] + ADP + H(+). The catalysed reaction is L-threonyl-[protein] + ATP = O-phospho-L-threonyl-[protein] + ADP + H(+). Serine/threonine-protein kinase required for cytoplasm to vacuole transport (Cvt) and autophagy as a part of the autophagy-specific VPS34 PI3-kinase complex I. This complex is essential to recruit the ATG8-phosphatidylinositol conjugate and the ATG12-ATG5 conjugate to the pre-autophagosomal structure. Is also involved in endosome-to-Golgi retrograde transport as part of the VPS34 PI3-kinase complex II. This second complex is required for the endosome-to-Golgi retrieval of PEP1 and KEX2, and the recruitment of VPS5 and VPS7, two components of the retromer complex, to endosomal membranes (probably through the synthesis of a specific pool of phosphatidylinositol 3-phosphate recruiting the retromer to the endosomes). By regulating VPS34 kinase activity, VPS15 appears to be essential for the efficient delivery of soluble hydrolases to the yeast vacuole. May function as a G protein beta subunit to propagate the pheromone response at the endosome with GPA1. In Saccharomyces cerevisiae (strain ATCC 204508 / S288c) (Baker's yeast), this protein is Serine/threonine-protein kinase VPS15.